A 137-amino-acid polypeptide reads, in one-letter code: NADH-quinone oxidoreductase subunit A 1 (137 aa).

3 helical membrane passes run phenylalanine 14–leucine 34, phenylalanine 66–tryptophan 86, and tryptophan 95–leucine 115.

Belongs to the complex I subunit 3 family. NDH-1 is composed of 13 different subunits. Subunits NuoA, H, J, K, L, M, N constitute the membrane sector of the complex.

Its subcellular location is the cell inner membrane. The catalysed reaction is a quinone + NADH + 5 H(+)(in) = a quinol + NAD(+) + 4 H(+)(out). In terms of biological role, NDH-1 shuttles electrons from NADH, via FMN and iron-sulfur (Fe-S) centers, to quinones in the respiratory chain. The immediate electron acceptor for the enzyme in this species is believed to be ubiquinone. Couples the redox reaction to proton translocation (for every two electrons transferred, four hydrogen ions are translocated across the cytoplasmic membrane), and thus conserves the redox energy in a proton gradient. This is NADH-quinone oxidoreductase subunit A 1 from Pseudomonas paraeruginosa (strain DSM 24068 / PA7) (Pseudomonas aeruginosa (strain PA7)).